A 256-amino-acid chain; its full sequence is Protein FixA (256 aa).

Belongs to the ETF beta-subunit/FixA family. As to quaternary structure, heterodimer of FixA and FixB.

The protein operates within amine and polyamine metabolism; carnitine metabolism. Functionally, required for anaerobic carnitine reduction. May bring reductant to CaiA. In Salmonella paratyphi A (strain ATCC 9150 / SARB42), this protein is Protein FixA.